The following is a 347-amino-acid chain: Holliday junction branch migration complex subunit RuvB (347 aa).

The tract at residues 1–182 is large ATPase domain (RuvB-L); sequence MSAQNPVLTP…FGIPVRLSFY (182 aa). Residues L21, R22, G63, K66, T67, T68, 129–131, R172, Y182, and R219 each bind ATP; that span reads EDF. Residue T67 coordinates Mg(2+). Positions 183-253 are small ATPAse domain (RuvB-S); it reads TVEELELIVR…IADEALTRLL (71 aa). The interval 256 to 347 is head domain (RuvB-H); that stretch reads NMGLDQLDTR…QFRLTLEDDD (92 aa). The DNA site is built by R292, R311, and R316.

Belongs to the RuvB family. In terms of assembly, homohexamer. Forms an RuvA(8)-RuvB(12)-Holliday junction (HJ) complex. HJ DNA is sandwiched between 2 RuvA tetramers; dsDNA enters through RuvA and exits via RuvB. An RuvB hexamer assembles on each DNA strand where it exits the tetramer. Each RuvB hexamer is contacted by two RuvA subunits (via domain III) on 2 adjacent RuvB subunits; this complex drives branch migration. In the full resolvosome a probable DNA-RuvA(4)-RuvB(12)-RuvC(2) complex forms which resolves the HJ.

Its subcellular location is the cytoplasm. It catalyses the reaction ATP + H2O = ADP + phosphate + H(+). Functionally, the RuvA-RuvB-RuvC complex processes Holliday junction (HJ) DNA during genetic recombination and DNA repair, while the RuvA-RuvB complex plays an important role in the rescue of blocked DNA replication forks via replication fork reversal (RFR). RuvA specifically binds to HJ cruciform DNA, conferring on it an open structure. The RuvB hexamer acts as an ATP-dependent pump, pulling dsDNA into and through the RuvAB complex. RuvB forms 2 homohexamers on either side of HJ DNA bound by 1 or 2 RuvA tetramers; 4 subunits per hexamer contact DNA at a time. Coordinated motions by a converter formed by DNA-disengaged RuvB subunits stimulates ATP hydrolysis and nucleotide exchange. Immobilization of the converter enables RuvB to convert the ATP-contained energy into a lever motion, pulling 2 nucleotides of DNA out of the RuvA tetramer per ATP hydrolyzed, thus driving DNA branch migration. The RuvB motors rotate together with the DNA substrate, which together with the progressing nucleotide cycle form the mechanistic basis for DNA recombination by continuous HJ branch migration. Branch migration allows RuvC to scan DNA until it finds its consensus sequence, where it cleaves and resolves cruciform DNA. This Allorhizobium ampelinum (strain ATCC BAA-846 / DSM 112012 / S4) (Agrobacterium vitis (strain S4)) protein is Holliday junction branch migration complex subunit RuvB.